Consider the following 616-residue polypeptide: MPKYRSATTTHGRNMAGARALWRATGMTDADFGKPIIAVVNSFTQFVPGHVHLRDLGKLVAEQIEAAGGVAKEFNTIAVDDGIAMGHGGMLYSLPSRELIADSVEYMVNAHCADAMVCISNCDKITPGMLMASLRLNIPVIFVSGGPMEAGKTKLSDQIIKLDLVDAMIQGADPKVSDSQSDQVERSACPTCGSCSGMFTANSMNCLTEALGLSQPGNGSLLATHADRKQLFLNAGKRIVELTKRYYEQDDESALPRNIASKAAFENAMTLDIAMGGSTNTVLHLLAAAQEAEIDFTMSDIDKLSRKVPQLCKVAPSTQKYHMEDVHRAGGVIGILGELDRAGLLNRDVKNVLGLTLPQTLEQYDIIVTQDDAVKNMFRAGPAGIRTTQAFSQDCRWDTLDDDRSNGCIRSLEHAYSKDGGLAVLYGNFAENGCIVKTAGVDDSILKFTGPAKVYESQDDAVEAILGGKVVAGDVVVIRYEGPKGGPGMQEMLYPTSFLKSMGLGKACALITDGRFSGGTSGLSIGHVSPEAASGGSIGLIEDGDLIAIDIPNRGIQLQVSDAELAARREAQEARGNKAWTPKNRERQVSFALRAYASLATSADKGAVRDKSKLGG.

D81 contributes to the Mg(2+) binding site. Position 122 (C122) interacts with [2Fe-2S] cluster. Mg(2+) contacts are provided by D123 and K124. Position 124 is an N6-carboxylysine (K124). C195 lines the [2Fe-2S] cluster pocket. Residue E491 coordinates Mg(2+). The active-site Proton acceptor is the S517.

Belongs to the IlvD/Edd family. Homodimer. [2Fe-2S] cluster is required as a cofactor. The cofactor is Mg(2+).

It carries out the reaction (2R)-2,3-dihydroxy-3-methylbutanoate = 3-methyl-2-oxobutanoate + H2O. It catalyses the reaction (2R,3R)-2,3-dihydroxy-3-methylpentanoate = (S)-3-methyl-2-oxopentanoate + H2O. The protein operates within amino-acid biosynthesis; L-isoleucine biosynthesis; L-isoleucine from 2-oxobutanoate: step 3/4. Its pathway is amino-acid biosynthesis; L-valine biosynthesis; L-valine from pyruvate: step 3/4. In terms of biological role, functions in the biosynthesis of branched-chain amino acids. Catalyzes the dehydration of (2R,3R)-2,3-dihydroxy-3-methylpentanoate (2,3-dihydroxy-3-methylvalerate) into 2-oxo-3-methylpentanoate (2-oxo-3-methylvalerate) and of (2R)-2,3-dihydroxy-3-methylbutanoate (2,3-dihydroxyisovalerate) into 2-oxo-3-methylbutanoate (2-oxoisovalerate), the penultimate precursor to L-isoleucine and L-valine, respectively. The protein is Dihydroxy-acid dehydratase of Escherichia coli O81 (strain ED1a).